The following is a 297-amino-acid chain: UDP-N-acetylenolpyruvoylglucosamine reductase (297 aa).

The FAD-binding PCMH-type domain occupies 27–192 (IGGPADALLE…LRAAYRLHPG (166 aa)). Arg-170 is a catalytic residue. The active-site Proton donor is the Ser-220. Glu-290 is an active-site residue.

This sequence belongs to the MurB family. FAD is required as a cofactor.

The protein resides in the cytoplasm. It carries out the reaction UDP-N-acetyl-alpha-D-muramate + NADP(+) = UDP-N-acetyl-3-O-(1-carboxyvinyl)-alpha-D-glucosamine + NADPH + H(+). It participates in cell wall biogenesis; peptidoglycan biosynthesis. In terms of biological role, cell wall formation. In Rubrobacter xylanophilus (strain DSM 9941 / JCM 11954 / NBRC 16129 / PRD-1), this protein is UDP-N-acetylenolpyruvoylglucosamine reductase.